The chain runs to 331 residues: UPF0194 membrane protein YbhG (331 aa).

A signal peptide spans 1–19 (MKKPVVIGLAIAAIVTVIA). Residues 107–208 (EEIAQAAAAV…LDLQDTTLIA (102 aa)) are a coiled coil.

This sequence belongs to the UPF0194 family.

The protein localises to the periplasm. The protein is UPF0194 membrane protein YbhG of Salmonella arizonae (strain ATCC BAA-731 / CDC346-86 / RSK2980).